The following is a 281-amino-acid chain: Large ribosomal subunit protein uL22 (281 aa).

The segment at 1–225 (MASPMGSTAS…KAGGAAEAEV (225 aa)) is large ribosomal subunit protein uL22. Disordered stretches follow at residues 137–175 (RATK…PVAA) and 199–281 (AVAS…GGTR). Over residues 139–153 (TKKAVPKGARHRRRL) the composition is skewed to basic residues. Composition is skewed to low complexity over residues 159–175 (PAAS…PVAA) and 199–239 (AVAS…APAA). The interval 226–281 (ATTDEQTTETAPAAEAEKPAVRRPAARKSTTSARRRAAETEGHDSDAESTDEGGTR) is unknown. Residues 261–271 (RAAETEGHDSD) show a composition bias toward basic and acidic residues. Over residues 272 to 281 (AESTDEGGTR) the composition is skewed to acidic residues.

The protein belongs to the universal ribosomal protein uL22 family. As to quaternary structure, part of the 50S ribosomal subunit.

Its function is as follows. The globular domain of the protein is located near the polypeptide exit tunnel on the outside of the subunit, while an extended beta-hairpin is found that lines the wall of the exit tunnel in the center of the 70S ribosome. Functionally, this protein binds specifically to 23S rRNA; its binding is stimulated by other ribosomal proteins, e.g. L4, L17, and L20. It is important during the early stages of 50S assembly. It makes multiple contacts with different domains of the 23S rRNA in the assembled 50S subunit and ribosome. In Acidothermus cellulolyticus (strain ATCC 43068 / DSM 8971 / 11B), this protein is Large ribosomal subunit protein uL22.